Here is a 274-residue protein sequence, read N- to C-terminus: NADPH-dependent 7-cyano-7-deazaguanine reductase (274 aa).

Residue 80–82 coordinates substrate; it reads VES. Residue 82–83 participates in NADPH binding; that stretch reads SK. Cysteine 181 (thioimide intermediate) is an active-site residue. The Proton donor role is filled by aspartate 188. Position 220–221 (220–221) interacts with substrate; it reads HE. 249–250 is an NADPH binding site; the sequence is RG.

The protein belongs to the GTP cyclohydrolase I family. QueF type 2 subfamily. In terms of assembly, homodimer.

Its subcellular location is the cytoplasm. The catalysed reaction is 7-aminomethyl-7-carbaguanine + 2 NADP(+) = 7-cyano-7-deazaguanine + 2 NADPH + 3 H(+). It participates in tRNA modification; tRNA-queuosine biosynthesis. In terms of biological role, catalyzes the NADPH-dependent reduction of 7-cyano-7-deazaguanine (preQ0) to 7-aminomethyl-7-deazaguanine (preQ1). The chain is NADPH-dependent 7-cyano-7-deazaguanine reductase from Paraburkholderia phymatum (strain DSM 17167 / CIP 108236 / LMG 21445 / STM815) (Burkholderia phymatum).